The sequence spans 637 residues: DNA mismatch repair protein MutL (637 aa).

Belongs to the DNA mismatch repair MutL/HexB family.

This protein is involved in the repair of mismatches in DNA. It is required for dam-dependent methyl-directed DNA mismatch repair. May act as a 'molecular matchmaker', a protein that promotes the formation of a stable complex between two or more DNA-binding proteins in an ATP-dependent manner without itself being part of a final effector complex. In Actinobacillus succinogenes (strain ATCC 55618 / DSM 22257 / CCUG 43843 / 130Z), this protein is DNA mismatch repair protein MutL.